The sequence spans 398 residues: Acetate kinase 1 (398 aa).

N9 contacts Mg(2+). K16 is a binding site for ATP. R89 is a binding site for substrate. The active-site Proton donor/acceptor is D146. Residues 206 to 210 (HLGNG), 281 to 283 (DCR), and 329 to 333 (GIGEN) each bind ATP. Mg(2+) is bound at residue E384.

The protein belongs to the acetokinase family. Homodimer. Requires Mg(2+) as cofactor. Mn(2+) serves as cofactor.

It localises to the cytoplasm. The enzyme catalyses acetate + ATP = acetyl phosphate + ADP. It participates in metabolic intermediate biosynthesis; acetyl-CoA biosynthesis; acetyl-CoA from acetate: step 1/2. In terms of biological role, catalyzes the formation of acetyl phosphate from acetate and ATP. Can also catalyze the reverse reaction. The polypeptide is Acetate kinase 1 (Vibrio parahaemolyticus serotype O3:K6 (strain RIMD 2210633)).